The following is a 250-amino-acid chain: Hydroxyethylthiazole kinase (250 aa).

Methionine 39 is a substrate binding site. Positions 114 and 159 each coordinate ATP. Residue glycine 186 coordinates substrate.

Belongs to the Thz kinase family. The cofactor is Mg(2+).

It carries out the reaction 5-(2-hydroxyethyl)-4-methylthiazole + ATP = 4-methyl-5-(2-phosphooxyethyl)-thiazole + ADP + H(+). It participates in cofactor biosynthesis; thiamine diphosphate biosynthesis; 4-methyl-5-(2-phosphoethyl)-thiazole from 5-(2-hydroxyethyl)-4-methylthiazole: step 1/1. Functionally, catalyzes the phosphorylation of the hydroxyl group of 4-methyl-5-beta-hydroxyethylthiazole (THZ). In Lactococcus lactis subsp. cremoris (strain MG1363), this protein is Hydroxyethylthiazole kinase.